The following is a 362-amino-acid chain: Oxygen-dependent coproporphyrinogen-III oxidase (362 aa).

The interval 12–31 (RQENDQSTPQLELPPTDSRD) is disordered. A substrate-binding site is contributed by serine 118. The a divalent metal cation site is built by histidine 122 and histidine 132. Histidine 132 serves as the catalytic Proton donor. Residue 134-136 (NYR) participates in substrate binding. A divalent metal cation is bound by residues histidine 166 and histidine 196. The tract at residues 286–321 (YVEFNLVWDRGTIFGLQTNGRTESILMSLPPLVRWE) is important for dimerization.

Belongs to the aerobic coproporphyrinogen-III oxidase family. In terms of assembly, homodimer. Requires a divalent metal cation as cofactor.

It is found in the cytoplasm. The catalysed reaction is coproporphyrinogen III + O2 + 2 H(+) = protoporphyrinogen IX + 2 CO2 + 2 H2O. Its pathway is porphyrin-containing compound metabolism; protoporphyrin-IX biosynthesis; protoporphyrinogen-IX from coproporphyrinogen-III (O2 route): step 1/1. Involved in the heme and chlorophyll biosynthesis. Catalyzes the aerobic oxidative decarboxylation of propionate groups of rings A and B of coproporphyrinogen-III to yield the vinyl groups in protoporphyrinogen-IX. This is Oxygen-dependent coproporphyrinogen-III oxidase from Synechococcus sp. (strain CC9902).